The following is a 392-amino-acid chain: Dihydroorotate dehydrogenase (quinone) (392 aa).

Residues Ala90–Lys94 and Thr114 each bind FMN. Residue Lys94 coordinates substrate. Asn139–Phe143 provides a ligand contact to substrate. The FMN site is built by Asn173 and Asn206. Asn206 contacts substrate. Ser209 acts as the Nucleophile in catalysis. Asn211 is a binding site for substrate. Lys243 and Val271 together coordinate FMN. Asn272–Thr273 contributes to the substrate binding site. FMN contacts are provided by residues Gly301, Gly330, and Tyr351–Thr352.

This sequence belongs to the dihydroorotate dehydrogenase family. Type 2 subfamily. As to quaternary structure, monomer. Requires FMN as cofactor.

The protein resides in the cell membrane. It carries out the reaction (S)-dihydroorotate + a quinone = orotate + a quinol. Its pathway is pyrimidine metabolism; UMP biosynthesis via de novo pathway; orotate from (S)-dihydroorotate (quinone route): step 1/1. Its function is as follows. Catalyzes the conversion of dihydroorotate to orotate with quinone as electron acceptor. This chain is Dihydroorotate dehydrogenase (quinone), found in Prochlorococcus marinus (strain MIT 9313).